The following is a 136-amino-acid chain: ATP synthase epsilon chain (136 aa).

The protein belongs to the ATPase epsilon chain family. As to quaternary structure, F-type ATPases have 2 components, CF(1) - the catalytic core - and CF(0) - the membrane proton channel. CF(1) has five subunits: alpha(3), beta(3), gamma(1), delta(1), epsilon(1). CF(0) has three main subunits: a, b and c.

The protein resides in the cell inner membrane. In terms of biological role, produces ATP from ADP in the presence of a proton gradient across the membrane. The sequence is that of ATP synthase epsilon chain from Hydrogenobaculum sp. (strain Y04AAS1).